The sequence spans 298 residues: UTP--glucose-1-phosphate uridylyltransferase (298 aa).

This sequence belongs to the UDPGP type 2 family.

The enzyme catalyses alpha-D-glucose 1-phosphate + UTP + H(+) = UDP-alpha-D-glucose + diphosphate. It participates in carbohydrate metabolism; nucleotide-sugar metabolism. Its pathway is capsule biogenesis; capsule polysaccharide biosynthesis. The sequence is that of UTP--glucose-1-phosphate uridylyltransferase (galF) from Klebsiella pneumoniae.